The sequence spans 177 residues: O-acetyl-ADP-ribose deacetylase (177 aa).

A Macro domain is found at 1-175; the sequence is MKTRIHVVQG…LYERLLTQQG (175 aa). Substrate-binding positions include 11-12, asparagine 25, 33-35, and 122-126; these read DI, GVD, and STGVY. The Proton acceptor role is filled by aspartate 35.

This sequence belongs to the MacroD-type family. YmdB subfamily. In terms of assembly, homodimer. Interacts with RNase III.

It catalyses the reaction 3''-O-acetyl-ADP-D-ribose + H2O = ADP-D-ribose + acetate + H(+). It carries out the reaction 2''-O-acetyl-ADP-D-ribose + H2O = ADP-D-ribose + acetate + H(+). Functionally, deacetylates O-acetyl-ADP ribose to yield ADP-ribose and free acetate. Down-regulates ribonuclease 3 (RNase III) activity. Acts by interacting directly with the region of the ribonuclease that is required for dimerization/activation. The protein is O-acetyl-ADP-ribose deacetylase of Shigella dysenteriae serotype 1 (strain Sd197).